Reading from the N-terminus, the 599-residue chain is Phosphomethylpyrimidine synthase (599 aa).

The segment covering 1-16 has biased composition (polar residues); that stretch reads MSAASANSVTNPSAWE. Disordered stretches follow at residues 1–53 and 82–108; these read MSAA…PNDP and EDTE…GAAS. The segment covering 87–100 has biased composition (basic and acidic residues); sequence YAGRERNLADDGRS. Residues Asn-192, Met-221, Tyr-250, His-286, 306-308, 347-350, and Glu-386 contribute to the substrate site; these read SRG and DGLR. His-390 lines the Zn(2+) pocket. Substrate is bound at residue Tyr-413. Zn(2+) is bound at residue His-454. [4Fe-4S] cluster is bound by residues Cys-534, Cys-537, and Cys-542.

The protein belongs to the ThiC family. It depends on [4Fe-4S] cluster as a cofactor.

It catalyses the reaction 5-amino-1-(5-phospho-beta-D-ribosyl)imidazole + S-adenosyl-L-methionine = 4-amino-2-methyl-5-(phosphooxymethyl)pyrimidine + CO + 5'-deoxyadenosine + formate + L-methionine + 3 H(+). It functions in the pathway cofactor biosynthesis; thiamine diphosphate biosynthesis. Catalyzes the synthesis of the hydroxymethylpyrimidine phosphate (HMP-P) moiety of thiamine from aminoimidazole ribotide (AIR) in a radical S-adenosyl-L-methionine (SAM)-dependent reaction. This chain is Phosphomethylpyrimidine synthase, found in Corynebacterium diphtheriae (strain ATCC 700971 / NCTC 13129 / Biotype gravis).